A 409-amino-acid chain; its full sequence is Peptidase T (409 aa).

Zn(2+) is bound at residue His-78. The active site involves Asp-80. Asp-140 serves as a coordination point for Zn(2+). Glu-173 acts as the Proton acceptor in catalysis. The Zn(2+) site is built by Glu-174, Asp-196, and His-379.

It belongs to the peptidase M20B family. Requires Zn(2+) as cofactor.

Its subcellular location is the cytoplasm. It carries out the reaction Release of the N-terminal residue from a tripeptide.. Cleaves the N-terminal amino acid of tripeptides. The protein is Peptidase T of Salmonella dublin (strain CT_02021853).